The chain runs to 446 residues: Na(+)-translocating NADH-quinone reductase subunit A (446 aa).

This sequence belongs to the NqrA family. In terms of assembly, composed of six subunits; NqrA, NqrB, NqrC, NqrD, NqrE and NqrF.

The enzyme catalyses a ubiquinone + n Na(+)(in) + NADH + H(+) = a ubiquinol + n Na(+)(out) + NAD(+). Functionally, NQR complex catalyzes the reduction of ubiquinone-1 to ubiquinol by two successive reactions, coupled with the transport of Na(+) ions from the cytoplasm to the periplasm. NqrA to NqrE are probably involved in the second step, the conversion of ubisemiquinone to ubiquinol. The chain is Na(+)-translocating NADH-quinone reductase subunit A from Vibrio vulnificus (strain CMCP6).